The chain runs to 315 residues: MDGSSPLLAAAGSDGDRSSSEGEYTLAGGPSAGDTEKREGESPMEAAGAGTVGFSISRLDTLSALRLNRTRPAADTELRYLHLLWKPGELLQAGRSTPGKITSSRVRRLARARRNMGPIGKDLHAVKRLREAANSNDIDTVRRLLEDDTDPCAADDKGRTALHFSSCNGNETIVQLLLSYGADPNQRDSLGNTPLHLAACTNHVPVITTLLRGGARVDALDRAGRTPLHLARSKLNILQEGDSRSLETLRGEVTQIIQMLREYLNIMGQSEEREKLEHISTQLQNTRTREQVDEVTDLLASFTSLSIQMQNMGDR.

The tract at residues 1 to 49 (MDGSSPLLAAAGSDGDRSSSEGEYTLAGGPSAGDTEKREGESPMEAAGA) is disordered. 4 ANK repeats span residues 124–153 (HAVK…DPCA), 157–186 (KGRT…DPNQ), 190–219 (LGNT…RVDA), and 223–255 (AGRT…EVTQ).

The protein resides in the nucleus. The protein localises to the cytoplasm. It is found in the midbody. In terms of biological role, plays an important role in regulating intracellular signaling events associated with erythroid terminal differentiation. The sequence is that of Ankyrin repeat domain-containing protein 54 (ankrd54) from Danio rerio (Zebrafish).